A 394-amino-acid chain; its full sequence is Phosphoglycerate kinase (394 aa).

Substrate-binding positions include 21–23 (DFN), R36, 59–62 (HLGR), R118, and R151. S183 is subject to Phosphoserine. ATP contacts are provided by K201 and G292. At T299 the chain carries Phosphothreonine. ATP contacts are provided by residues E323 and 350–353 (GGDS).

Belongs to the phosphoglycerate kinase family. In terms of assembly, monomer.

The protein resides in the cytoplasm. It carries out the reaction (2R)-3-phosphoglycerate + ATP = (2R)-3-phospho-glyceroyl phosphate + ADP. It functions in the pathway carbohydrate degradation; glycolysis; pyruvate from D-glyceraldehyde 3-phosphate: step 2/5. The polypeptide is Phosphoglycerate kinase (Bacillus cereus (strain B4264)).